Consider the following 571-residue polypeptide: PR domain zinc finger protein 14 (571 aa).

The residue at position 79 (S79) is a Phosphoserine. A disordered region spans residues 129–191; that stretch reads LGHQIIGGDN…PKPSNQEGKS (63 aa). Residues 165–176 are compositionally biased toward polar residues; it reads RTSQLLPCSPSK. The segment at 194–384 is interaction with CBFA2T2; sequence RFQFTEEDLH…DIPVSLQVTE (191 aa). In terms of domain architecture, SET spans 251-367; the sequence is EGLCLMQTVF…QNQELLVWYG (117 aa). A C2H2-type 1; atypical zinc finger spans residues 400 to 424; the sequence is YRCERCGKVFTYKYYRDKHLKYTPC. 5 C2H2-type zinc fingers span residues 432–455, 461–483, 489–511, 517–540, and 546–568; these read FPCS…LHVH, HKCS…MRVH, YQCV…IRQH, FKCK…RRSH, and CSCS…MKFH.

This sequence belongs to the class V-like SAM-binding methyltransferase superfamily. In terms of assembly, interacts with CBFA2T2. In terms of tissue distribution, expressed in embryonic stem cells. Tends to be overexpressed in breast cancer (at protein level).

The protein resides in the nucleus. Functionally, transcription factor that has both positive and negative roles on transcription. Required for the maintenance of embryonic stem cell identity and the reacquisition of pluripotency in somatic cells. May play an essential role in germ cell development at 2 levels: the reacquisition of potential pluripotency, including SOX2 up-regulation, and successful epigenetic reprogramming, characterized by EHMT1 repression. Its association with CBFA2T2 is required for the functions in pluripotency and germ cell formation. Directly up-regulates the expression of pluripotency gene POU5F1 through its proximal enhancer. Binds to the DNA consensus sequence 5'-GGTC[TC]CTAA-3'. The chain is PR domain zinc finger protein 14 (PRDM14) from Homo sapiens (Human).